The sequence spans 331 residues: Isopenicillin N synthase (331 aa).

Isopenicillin N is bound by residues R87, Y91, S183, and Y189. Residues R87, Y91, S183, Y189, H214, and D216 each coordinate N-[(5S)-5-amino-5-carboxypentanoyl]-L-cysteinyl-D-valine. Residues 181–288 form the Fe2OG dioxygenase domain; the sequence is LSSVVLIRYP…RQSLPFFVNL (108 aa). Fe(2+) contacts are provided by H214, D216, and H270. Residue R279 participates in 2-oxoglutarate binding. An isopenicillin N-binding site is contributed by S281. N-[(5S)-5-amino-5-carboxypentanoyl]-L-cysteinyl-D-valine is bound at residue S281.

This sequence belongs to the iron/ascorbate-dependent oxidoreductase family. Requires Fe(2+) as cofactor.

The protein localises to the cytoplasm. Its subcellular location is the cytosol. It catalyses the reaction N-[(5S)-5-amino-5-carboxypentanoyl]-L-cysteinyl-D-valine + O2 = isopenicillin N + 2 H2O. It participates in antibiotic biosynthesis; penicillin G biosynthesis; penicillin G from L-alpha-aminoadipate and L-cysteine and L-valine: step 2/3. Isopenicillin N synthase; part of the gene cluster that mediates the biosynthesis of penicillin, the world's most important antibiotic. The first step of the pathway is performed by the trimodular NRPS acvA that produces the tripeptide N-[(5S)-5-amino-5-carboxypentanoyl]-L-cysteinyl-D-valine (LLD-ACV or ACV) via condensation of the 3 residues L-2-aminoadipate, L-cysteine and L-valine. The precursor amino acids for penicillin biosynthesis are withdrawn from the vacuolar amino acid pool by the MFS-type transporter penV. Each of the constituent amino acids of the tripeptide acv are activated as aminoacyl-adenylates with peptide bonds formed through the participation of amino acid thioester intermediates. The tripeptide ACV is then cyclized to form isopenicillin N (IPN) by the isopenicillin N synthase ipnA that forms the beta-lactam nucleus. Finally, the alpha-aminoadipyl side chain is exchanged for phenylacetic acid by the isopenicillin N acyltransferase aatA to yield penicillin. This step occurs in the peroxisomal matrix and the penM and paaT transporters are involved in the isopenicillin N and phenylacetic acid import into the peroxisome, respectively. In Penicillium rubens (strain ATCC 28089 / DSM 1075 / NRRL 1951 / Wisconsin 54-1255) (Penicillium chrysogenum), this protein is Isopenicillin N synthase.